Consider the following 113-residue polypeptide: Large ribosomal subunit protein uL22 (113 aa).

The protein belongs to the universal ribosomal protein uL22 family. As to quaternary structure, part of the 50S ribosomal subunit.

Its function is as follows. This protein binds specifically to 23S rRNA; its binding is stimulated by other ribosomal proteins, e.g. L4, L17, and L20. It is important during the early stages of 50S assembly. It makes multiple contacts with different domains of the 23S rRNA in the assembled 50S subunit and ribosome. In terms of biological role, the globular domain of the protein is located near the polypeptide exit tunnel on the outside of the subunit, while an extended beta-hairpin is found that lines the wall of the exit tunnel in the center of the 70S ribosome. The protein is Large ribosomal subunit protein uL22 of Mycoplasmopsis synoviae (strain 53) (Mycoplasma synoviae).